A 215-amino-acid chain; its full sequence is Pyrrolidone-carboxylate peptidase (215 aa).

Catalysis depends on residues Glu-80, Cys-143, and His-167.

It belongs to the peptidase C15 family. Homotetramer.

It localises to the cytoplasm. It catalyses the reaction Release of an N-terminal pyroglutamyl group from a polypeptide, the second amino acid generally not being Pro.. Removes 5-oxoproline from various penultimate amino acid residues except L-proline. The chain is Pyrrolidone-carboxylate peptidase from Bacillus cereus (strain ATCC 10987 / NRS 248).